We begin with the raw amino-acid sequence, 634 residues long: Fluorothreonine transaldolase (634 aa).

The pyridoxal 5'-phosphate site is built by tyrosine 67, histidine 221, and histidine 247. Lysine 248 carries the N6-(pyridoxal phosphate)lysine modification. Arginine 375 provides a ligand contact to pyridoxal 5'-phosphate. Residues 428–456 (TGDPASAAGPPARERYAPPTAPAGHPARP) are disordered.

The protein belongs to the SHMT family. Requires pyridoxal 5'-phosphate as cofactor.

The enzyme catalyses fluoroacetaldehyde + L-threonine = 4-fluoro-L-threonine + acetaldehyde. Functionally, transaldolase that catalyzes the final step in 4-fluorothreonine biosynthesis. Mediates a L-threonine/fluoroaceldehyde to 4-fluoro-L-threonine/acetaldehyde crossover reaction. Can also convert chloroacetaldehyde into 4-chloro-L-threonine. Does not use glycine as a substrate. This Streptantibioticus cattleyicolor (Streptomyces cattleya) protein is Fluorothreonine transaldolase.